Consider the following 144-residue polypeptide: MESTLGSDLARLVRVWRALIDHRLKPLALTQTHWVTLHSINRLPPEQSQIQLAKAIGIEQPSLVRTLDQLEEKGLITRHTCANDRRAKRIKLTEAADPIIREVDSVISSTRGEILSGITTDEVQLLVGLIGKLEQNITELQNKQ.

The HTH marR-type domain occupies 2-135 (ESTLGSDLAR…LVGLIGKLEQ (134 aa)). Residues 49-72 (QIQLAKAIGIEQPSLVRTLDQLEE) constitute a DNA-binding region (H-T-H motif).

Belongs to the SlyA family. As to quaternary structure, homodimer.

Functionally, transcription regulator that can specifically activate or repress expression of target genes. The polypeptide is Transcriptional regulator SlyA (Serratia proteamaculans (strain 568)).